The chain runs to 109 residues: Period circadian protein (109 aa).

Polar residues-rich tracts occupy residues 42-56 (QSYS…NLSP) and 68-80 (SSRN…NLNM). The segment at 42-109 (QSYSTPANTG…LVTLTESLLK (68 aa)) is disordered. Positions 81–97 (GSVTNTSNTGTGTSSGS) are enriched in low complexity.

In terms of assembly, forms a heterodimer with timeless (TIM); the complex then translocates into the nucleus. Phosphorylated with a circadian rhythmicity, probably by the double-time protein (dbt). Phosphorylation could be implicated in the stability of per monomer and in the formation of heterodimer per-tim.

Its subcellular location is the nucleus. It localises to the cytoplasm. It is found in the perinuclear region. In terms of biological role, essential for biological clock functions. Determines the period length of circadian and ultradian rhythms; an increase in PER dosage leads to shortened circadian rhythms and a decrease leads to lengthened circadian rhythms. Essential for the circadian rhythmicity of locomotor activity, eclosion behavior, and for the rhythmic component of the male courtship song that originates in the thoracic nervous system. The biological cycle depends on the rhythmic formation and nuclear localization of the TIM-PER complex. Light induces the degradation of TIM, which promotes elimination of PER. Nuclear activity of the heterodimer coordinatively regulates PER and TIM transcription through a negative feedback loop. Behaves as a negative element in circadian transcriptional loop. Does not appear to bind DNA, suggesting indirect transcriptional inhibition. This is Period circadian protein (per) from Musca domestica (House fly).